We begin with the raw amino-acid sequence, 416 residues long: Actin-like protein 9 (416 aa).

The disordered stretch occupies residues 1-40 (MDASRPKSSESQSSLEAPRPGPNPSPNVVNKPLQRDSPGM).

It belongs to the actin family. In terms of assembly, interacts with ACTL7A. As to expression, testis-specific.

The protein localises to the cytoplasmic vesicle. It is found in the secretory vesicle. Its subcellular location is the acrosome. The protein resides in the cytoplasm. It localises to the cytoskeleton. The protein localises to the perinuclear theca. Functionally, testis-specic protein that plays an important role in fusion of proacrosomal vesicles and perinuclear theca formation. This is Actin-like protein 9 from Homo sapiens (Human).